We begin with the raw amino-acid sequence, 156 residues long: ATP synthase subunit b (156 aa).

Residues Ala-13 to Ile-33 traverse the membrane as a helical segment.

Belongs to the ATPase B chain family. F-type ATPases have 2 components, F(1) - the catalytic core - and F(0) - the membrane proton channel. F(1) has five subunits: alpha(3), beta(3), gamma(1), delta(1), epsilon(1). F(0) has three main subunits: a(1), b(2) and c(10-14). The alpha and beta chains form an alternating ring which encloses part of the gamma chain. F(1) is attached to F(0) by a central stalk formed by the gamma and epsilon chains, while a peripheral stalk is formed by the delta and b chains.

The protein resides in the cell inner membrane. Functionally, f(1)F(0) ATP synthase produces ATP from ADP in the presence of a proton or sodium gradient. F-type ATPases consist of two structural domains, F(1) containing the extramembraneous catalytic core and F(0) containing the membrane proton channel, linked together by a central stalk and a peripheral stalk. During catalysis, ATP synthesis in the catalytic domain of F(1) is coupled via a rotary mechanism of the central stalk subunits to proton translocation. In terms of biological role, component of the F(0) channel, it forms part of the peripheral stalk, linking F(1) to F(0). The protein is ATP synthase subunit b of Shewanella woodyi (strain ATCC 51908 / MS32).